The sequence spans 61 residues: MAKKSMIAKNKRPAKFSTQAYTRCEKCGRPHSVYRKFQLCRVCFRDLAYKGQVPGVTKASW.

Zn(2+)-binding residues include cysteine 24, cysteine 27, cysteine 40, and cysteine 43.

The protein belongs to the universal ribosomal protein uS14 family. Zinc-binding uS14 subfamily. In terms of assembly, part of the 30S ribosomal subunit. Contacts proteins S3 and S10. Zn(2+) serves as cofactor.

Its function is as follows. Binds 16S rRNA, required for the assembly of 30S particles and may also be responsible for determining the conformation of the 16S rRNA at the A site. This chain is Small ribosomal subunit protein uS14B, found in Streptococcus agalactiae serotype Ia (strain ATCC 27591 / A909 / CDC SS700).